We begin with the raw amino-acid sequence, 1032 residues long: Chitin synthase 8 (1032 aa).

2 stretches are compositionally biased toward pro residues: residues 1–11 (MRPGDIYPPPQ) and 26–41 (PPQPQPYPPQPYPPQQ). The segment at 1 to 220 (MRPGDIYPPP…DDDMNDSHPL (220 aa)) is disordered. 3 stretches are compositionally biased toward polar residues: residues 65–78 (MSPTPQEPQGSRYN), 98–107 (LPTQSLSPFN), and 143–160 (TNPSHLPPQQQLTPSYSY). N-linked (GlcNAc...) asparagine glycosylation occurs at Asn-78. Residues 176 to 188 (PHHSSQSSVSSIP) show a composition bias toward low complexity. Residues Asn-215, Asn-304, Asn-473, Asn-545, and Asn-691 are each glycosylated (N-linked (GlcNAc...) asparagine). The next 7 helical transmembrane spans lie at 728 to 748 (TLNMVFAWFALGNYYIAFFVL), 762 to 782 (VNIPLHYIYIALLLWCFLLSL), 796 to 816 (SMVGFALITIYMLFAAIFLAV), 842 to 862 (IVISLLATYGLYIISSLMALE), 870 to 890 (FFQYLLIAPSYINVLNVYAFC), 972 to 992 (VLLVWTMTNGALVAVILQASG), and 995 to 1015 (NSLATTYMGVLLYTVAGLAFF).

It belongs to the chitin synthase family.

The protein localises to the cell membrane. It carries out the reaction [(1-&gt;4)-N-acetyl-beta-D-glucosaminyl](n) + UDP-N-acetyl-alpha-D-glucosamine = [(1-&gt;4)-N-acetyl-beta-D-glucosaminyl](n+1) + UDP + H(+). In terms of biological role, polymerizes chitin, a structural polymer of the cell wall and septum, by transferring the sugar moiety of UDP-GlcNAc to the non-reducing end of the growing chitin polymer. In Cryptococcus neoformans var. grubii serotype A (strain H99 / ATCC 208821 / CBS 10515 / FGSC 9487) (Filobasidiella neoformans var. grubii), this protein is Chitin synthase 8.